A 425-amino-acid polypeptide reads, in one-letter code: Histidine--tRNA ligase (425 aa).

The protein belongs to the class-II aminoacyl-tRNA synthetase family. In terms of assembly, homodimer.

The protein localises to the cytoplasm. It catalyses the reaction tRNA(His) + L-histidine + ATP = L-histidyl-tRNA(His) + AMP + diphosphate + H(+). The sequence is that of Histidine--tRNA ligase from Histophilus somni (strain 129Pt) (Haemophilus somnus).